The sequence spans 167 residues: Interferon gamma (167 aa).

An N-terminal signal peptide occupies residues Met-1 to Cys-23. Gln-24 carries the pyrrolidone carboxylic acid modification. 2 N-linked (GlcNAc...) asparagine glycosylation sites follow: Asn-39 and Asn-105. Residues Ser-148–Ile-167 are disordered. Basic residues predominate over residues Asn-149–Ile-167.

Belongs to the type II (or gamma) interferon family. As to quaternary structure, homodimer. Interacts with IFNGR1 (via extracellular domain); this interaction promotes IFNGR1 dimerization. Released primarily from activated T lymphocytes.

It localises to the secreted. Type II interferon produced by immune cells such as T-cells and NK cells that plays crucial roles in antimicrobial, antiviral, and antitumor responses by activating effector immune cells and enhancing antigen presentation. Primarily signals through the JAK-STAT pathway after interaction with its receptor IFNGR1 to affect gene regulation. Upon IFNG binding, IFNGR1 intracellular domain opens out to allow association of downstream signaling components JAK2, JAK1 and STAT1, leading to STAT1 activation, nuclear translocation and transcription of IFNG-regulated genes. Many of the induced genes are transcription factors such as IRF1 that are able to further drive regulation of a next wave of transcription. Plays a role in class I antigen presentation pathway by inducing a replacement of catalytic proteasome subunits with immunoproteasome subunits. In turn, increases the quantity, quality, and repertoire of peptides for class I MHC loading. Increases the efficiency of peptide generation also by inducing the expression of activator PA28 that associates with the proteasome and alters its proteolytic cleavage preference. Up-regulates as well MHC II complexes on the cell surface by promoting expression of several key molecules such as cathepsins B/CTSB, H/CTSH, and L/CTSL. Participates in the regulation of hematopoietic stem cells during development and under homeostatic conditions by affecting their development, quiescence, and differentiation. The polypeptide is Interferon gamma (IFNG) (Dasypus novemcinctus (Nine-banded armadillo)).